A 506-amino-acid chain; its full sequence is Sucrose transport protein SUT3 (506 aa).

Topologically, residues 1 to 20 (MAVDMELDGGGDGKGKAPPQ) are cytoplasmic. The helical transmembrane segment at 21–41 (ISLSGLFLACMVAGGVQYGWA) threads the bilayer. At 42–54 (LQLSLLTPYIQTL) the chain is on the extracellular side. Residues 55–75 (GIPHALTSVMWLCGPIAGLIV) traverse the membrane as a helical segment. Residues 76-94 (QPCVGLYSDKCTSSLGRRR) lie on the Cytoplasmic side of the membrane. A helical membrane pass occupies residues 95 to 115 (PFILTGCIIICISVIVIGFSS). Residues 116-135 (DIGYALGDATEDCKVYRGPR) lie on the Extracellular side of the membrane. Residues 136–156 (YHAAAAFILGFWLLDFSNNTV) form a helical membrane-spanning segment. The Cytoplasmic segment spans residues 157-171 (QGPARALMADLSGRH). The chain crosses the membrane as a helical span at residues 172 to 192 (GPSAANAIFCSWMALGNILGY). Residues 193–220 (SSGSTNDWHKWFPFLMTRACCEACANLK) lie on the Extracellular side of the membrane. A helical membrane pass occupies residues 221–241 (AAFLVAVVFLGLSTAVTMVFA). Residues 242 to 275 (REVALDPVAAAKRNEGEASGPLAVFKGMKNLPVG) are Cytoplasmic-facing. The helical transmembrane segment at 276-296 (MPSVLIVTGLTWLSWFPFILF) threads the bilayer. Residues 297–327 (DTDWMGREIYHGRPDGSPAEVTAFQEGVRQG) are Extracellular-facing. Residues 328–348 (AFGLLLNSIVLGISSFLIEPM) form a helical membrane-spanning segment. The Cytoplasmic portion of the chain corresponds to 349 to 355 (CRRLGAR). A helical membrane pass occupies residues 356-376 (AVWVMSSAVVCVAMAAVSVLS). Residues 377 to 404 (AWSLGDFGGSVQDAARAPAEEGGVRASA) are Extracellular-facing. The helical transmembrane segment at 405–425 (LALFVFLGLPFAVLCSVPFAV) threads the bilayer. The Cytoplasmic segment spans residues 426-441 (TAQLTASRGGGQGLCT). Residues 442–462 (GVLNISIVVPQMAIALGAGPW) traverse the membrane as a helical segment. The Extracellular segment spans residues 463 to 470 (DELFGEGN). The chain crosses the membrane as a helical span at residues 471 to 491 (IPAFAMASVFAAAAAAAGVVL). The Cytoplasmic portion of the chain corresponds to 492–506 (LPKVSVRSVSMAGGH).

This sequence belongs to the glycoside-pentoside-hexuronide (GPH) cation symporter transporter (TC 2.A.2.4) family. In terms of assembly, homodimer.

The protein resides in the cell membrane. The protein operates within glycan biosynthesis; sucrose metabolism. Functionally, responsible for the transport of sucrose into the cell, with the concomitant uptake of protons (symport system). May also transport other glucosides. The sequence is that of Sucrose transport protein SUT3 (SUT3) from Oryza sativa subsp. indica (Rice).